Consider the following 143-residue polypeptide: MAGVSVKDVDAQQFINAYAAFLKRSGKMTTPQWIDIVKTGTHKELAPYDPDWYYVRAAAIARHIYLRKQVGVGRLCKVYGGSVNRGMRPSHHRDGSGSVQRKVVQSLEKIGVLEKSDNGGRRISQQGQRDLDRIAYSLLEDEE.

This sequence belongs to the eukaryotic ribosomal protein eS19 family. Component of the small ribosomal subunit (SSU). Mature yeast ribosomes consist of a small (40S) and a large (60S) subunit. The 40S small subunit contains 1 molecule of ribosomal RNA (18S rRNA) and at least 33 different proteins. The large 60S subunit contains 3 rRNA molecules (25S, 5.8S and 5S rRNA) and at least 46 different proteins.

It is found in the cytoplasm. Its subcellular location is the nucleus. Functionally, component of the ribosome, a large ribonucleoprotein complex responsible for the synthesis of proteins in the cell. The small ribosomal subunit (SSU) binds messenger RNAs (mRNAs) and translates the encoded message by selecting cognate aminoacyl-transfer RNA (tRNA) molecules. The large subunit (LSU) contains the ribosomal catalytic site termed the peptidyl transferase center (PTC), which catalyzes the formation of peptide bonds, thereby polymerizing the amino acids delivered by tRNAs into a polypeptide chain. The nascent polypeptides leave the ribosome through a tunnel in the LSU and interact with protein factors that function in enzymatic processing, targeting, and the membrane insertion of nascent chains at the exit of the ribosomal tunnel. eS19 is required for proper maturation of the small (40S) ribosomal subunit. Binds to 40S pre-ribosomal particles, probably required after association of NOC4 but before association of ENP1, TSR1 and RIO2 with 20/21S pre-rRNA. The protein is Small ribosomal subunit protein eS19B (rps1902) of Schizosaccharomyces pombe (strain 972 / ATCC 24843) (Fission yeast).